The primary structure comprises 299 residues: tRNA dimethylallyltransferase (299 aa).

13–20 (GPTASGKT) contributes to the ATP binding site. Position 15–20 (15–20 (TASGKT)) interacts with substrate. The interaction with substrate tRNA stretch occupies residues 38 to 41 (DSRQ).

The protein belongs to the IPP transferase family. As to quaternary structure, monomer. Requires Mg(2+) as cofactor.

It carries out the reaction adenosine(37) in tRNA + dimethylallyl diphosphate = N(6)-dimethylallyladenosine(37) in tRNA + diphosphate. Catalyzes the transfer of a dimethylallyl group onto the adenine at position 37 in tRNAs that read codons beginning with uridine, leading to the formation of N6-(dimethylallyl)adenosine (i(6)A). In Prochlorococcus marinus (strain AS9601), this protein is tRNA dimethylallyltransferase.